The primary structure comprises 144 residues: AP-4 complex subunit sigma-1 (144 aa).

Belongs to the adaptor complexes small subunit family. Adaptor protein complex 4 (AP-4) is a heterotetramer composed of two large adaptins (epsilon-type subunit AP4E1 and beta-type subunit AP4B1), a medium adaptin (mu-type subunit AP4M1) and a small adaptin (sigma-type AP4S1). In terms of tissue distribution, widely expressed.

The protein localises to the golgi apparatus. The protein resides in the trans-Golgi network membrane. In terms of biological role, component of the adaptor protein complex 4 (AP-4). Adaptor protein complexes are vesicle coat components involved both in vesicle formation and cargo selection. They control the vesicular transport of proteins in different trafficking pathways. AP-4 forms a non clathrin-associated coat on vesicles departing the trans-Golgi network (TGN) and may be involved in the targeting of proteins from the trans-Golgi network (TGN) to the endosomal-lysosomal system. It is also involved in protein sorting to the basolateral membrane in epithelial cells and the proper asymmetric localization of somatodendritic proteins in neurons. AP-4 is involved in the recognition and binding of tyrosine-based sorting signals found in the cytoplasmic part of cargos, but may also recognize other types of sorting signal. The chain is AP-4 complex subunit sigma-1 from Homo sapiens (Human).